The following is a 428-amino-acid chain: 3-phosphoshikimate 1-carboxyvinyltransferase (428 aa).

3-phosphoshikimate is bound by residues Lys-20, Ser-21, and Arg-25. Position 20 (Lys-20) interacts with phosphoenolpyruvate. Phosphoenolpyruvate-binding residues include Gly-92 and Arg-120. 3-phosphoshikimate contacts are provided by Ser-166, Gln-168, Asp-314, and Lys-341. Gln-168 provides a ligand contact to phosphoenolpyruvate. Asp-314 serves as the catalytic Proton acceptor. 2 residues coordinate phosphoenolpyruvate: Arg-345 and Arg-387.

The protein belongs to the EPSP synthase family. In terms of assembly, monomer.

It is found in the cytoplasm. The catalysed reaction is 3-phosphoshikimate + phosphoenolpyruvate = 5-O-(1-carboxyvinyl)-3-phosphoshikimate + phosphate. It functions in the pathway metabolic intermediate biosynthesis; chorismate biosynthesis; chorismate from D-erythrose 4-phosphate and phosphoenolpyruvate: step 6/7. Catalyzes the transfer of the enolpyruvyl moiety of phosphoenolpyruvate (PEP) to the 5-hydroxyl of shikimate-3-phosphate (S3P) to produce enolpyruvyl shikimate-3-phosphate and inorganic phosphate. The protein is 3-phosphoshikimate 1-carboxyvinyltransferase of Listeria monocytogenes serovar 1/2a (strain ATCC BAA-679 / EGD-e).